Here is a 316-residue protein sequence, read N- to C-terminus: Actin patches distal protein 1 (316 aa).

It belongs to the APD1 family.

It is found in the cytoplasm. Its subcellular location is the nucleus. Functionally, required for normal localization of actin patches. Involved in tolerance to sodium ions and hydrogen peroxide. The chain is Actin patches distal protein 1 (APD1) from Saccharomyces cerevisiae (strain ATCC 204508 / S288c) (Baker's yeast).